Consider the following 233-residue polypeptide: Peroxisomal membrane protein 11-5 (233 aa).

At 1 to 92 (MSSLESARAD…PLILLGKSKN (92 aa)) the chain is on the cytoplasmic side. Residues 93-113 (ALLSTFLFLDQIVWAGRTGIY) form a helical membrane-spanning segment. The Lumenal portion of the chain corresponds to 114–206 (KNKERAEFLS…LLQLAPKKVT (93 aa)). Residues 207–226 (PRVTGAFGFASSLIACYQLL) form a helical membrane-spanning segment.

This sequence belongs to the peroxin-11 family. Expressed in seedlings, roots, shoots, leaf sheaths, flag leaf, panicles, spikelets, and endosperm.

Its subcellular location is the peroxisome membrane. Its function is as follows. Involved in peroxisomal proliferation. In Oryza sativa subsp. japonica (Rice), this protein is Peroxisomal membrane protein 11-5 (PEX11-5).